A 241-amino-acid polypeptide reads, in one-letter code: Uridylate kinase (241 aa).

Position 15-18 (15-18) interacts with ATP; sequence KLSG. Residues 23-28 are involved in allosteric activation by GTP; that stretch reads GTEGFG. Residue G57 coordinates UMP. 2 residues coordinate ATP: G58 and R62. UMP is bound by residues D77 and 138 to 145; that span reads TGNPFFTT. Positions 165, 171, and 174 each coordinate ATP.

The protein belongs to the UMP kinase family. As to quaternary structure, homohexamer.

It localises to the cytoplasm. It carries out the reaction UMP + ATP = UDP + ADP. Its pathway is pyrimidine metabolism; CTP biosynthesis via de novo pathway; UDP from UMP (UMPK route): step 1/1. With respect to regulation, allosterically activated by GTP. Inhibited by UTP. Functionally, catalyzes the reversible phosphorylation of UMP to UDP. This chain is Uridylate kinase, found in Escherichia coli O139:H28 (strain E24377A / ETEC).